The chain runs to 77 residues: Protein NS4 (77 aa).

Its subcellular location is the host cytoplasm. It is found in the host nucleus. The protein resides in the host nucleolus. Functionally, may function as a nucleic acid binding protein that modulates transcription of genes participating in the IFN response. The protein is Protein NS4 (Segment-9) of Antilocapra americana (Pronghorn).